The primary structure comprises 276 residues: Adenylate kinase (276 aa).

Position 50–55 (50–55) interacts with ATP; the sequence is GAGKGT. An NMP region spans residues 70–99; the sequence is ATGDMLRSQVAKKTPLGREAKKIMDQGGLV. AMP-binding positions include T71, R76, 97 to 99, 126 to 129, and Q133; these read GLV and GFPR. An LID region spans residues 167–204; the sequence is GRLVHPASGRSYHTTFNPPKKAMTDDVTGEPLIQRSDD. ATP is bound by residues R168 and 177-178; that span reads SY. 2 residues coordinate AMP: R201 and R212. Q240 provides a ligand contact to ATP.

Belongs to the adenylate kinase family. AK2 subfamily. Monomer.

The protein resides in the cytoplasm. Its subcellular location is the cytosol. The protein localises to the mitochondrion intermembrane space. It carries out the reaction AMP + ATP = 2 ADP. In terms of biological role, catalyzes the reversible transfer of the terminal phosphate group between ATP and AMP. Plays an important role in cellular energy homeostasis and in adenine nucleotide metabolism. Adenylate kinase activity is critical for regulation of the phosphate utilization and the AMP de novo biosynthesis pathways. The chain is Adenylate kinase from Pyricularia oryzae (strain 70-15 / ATCC MYA-4617 / FGSC 8958) (Rice blast fungus).